The following is a 166-amino-acid chain: Bile acid 7alpha-dehydratase (166 aa).

In terms of assembly, homodimer.

The catalysed reaction is 7alpha,12alpha-dihydroxy-3-oxochol-4-en-24-oyl-CoA = 12alpha-hydroxy-3-oxochola-4,6-dien-24-oyl-CoA + H2O. The enzyme catalyses 7alpha-hydroxy-3-oxochol-4-en-24-oyl-CoA = 3-oxochol-4,6-dien-24-oyl-CoA + H2O. It carries out the reaction 7alpha,12alpha-dihydroxy-3-oxochol-4-en-24-oate = 12alpha-hydroxy-3-oxochola-4,6-dien-24-oate + H2O. It catalyses the reaction 7alpha-hydroxy-3-oxochol-4-en-24-oate = 3-oxochola-4,6-dien-24-oate + H2O. The protein operates within lipid metabolism; bile acid biosynthesis. Its function is as follows. Functions in the bile acid 7alpha-dehydroxylation pathway, which forms secondary bile acids via the 7alpha-dehydroxylation of primary bile acids, and is carried out by intestinal anaerobic bacteria. Catalyzes the dehydration step in this pathway, yielding a 3-oxo-Delta(4,6)-bile acid-CoA intermediate. In vitro, can act on the free bile acids (non CoA-conjugated) 7-alpha,12-alpha-dihydroxy-3-oxochol-4-enoate and 7-alpha-hydroxy-3-oxochol-4-enoate, but not on 7-alpha,12-alpha-dihydroxy-3-oxo-5-beta-cholanate, 3-alpha,7-alpha,12-alpha-trihydroxy-5-beta-cholanate or 7-beta-hydroxy-3-oxochol-4-enoate. The protein is Bile acid 7alpha-dehydratase of Clostridium scindens (strain JCM 10418 / VPI 12708).